The following is a 545-amino-acid chain: Cleavage and polyadenylation specificity factor subunit 6 (545 aa).

A disordered region spans residues 37 to 69 (ISPSANNGDAPEDRDYLDSLPAPGGNEGSKGAP). The 81-residue stretch at 81 to 161 (IALYIGNLTW…QNPIVTPCNK (81 aa)) folds into the RRM domain. The segment covering 165–180 (SQFEMQSRKSTQSGQM) has biased composition (polar residues). 2 disordered regions span residues 165–404 (SQFE…PLSE) and 478–545 (YGSV…YRHR). Over residues 184-200 (GKAGPPGSGSRGGGFPP) the composition is skewed to gly residues. Pro residues-rich tracts occupy residues 220–230 (PVGPGGPPPHF), 237–265 (PRLP…PLGG), 287–363 (PMGP…PPGN), and 372–383 (GPPPGDPYGRPP). 2 stretches are compositionally biased toward basic and acidic residues: residues 384–397 (PYDR…DMDA) and 483–497 (GRRE…SRSR). A compositionally biased stretch (basic residues) spans 498-508 (EKSRRHKSRSR). Positions 509-545 (DRHEDYYRERSRERDRHRERDRDRERDREREREYRHR) are enriched in basic and acidic residues.

Belongs to the RRM CPSF6/7 family. Component of the cleavage factor Im (CFIm) complex.

The protein localises to the nucleus. It is found in the nucleoplasm. The protein resides in the nucleus speckle. It localises to the cytoplasm. Component of the cleavage factor Im (CFIm) complex that functions as an activator of the pre-mRNA 3'-end cleavage and polyadenylation processing required for the maturation of pre-mRNA into functional mRNAs. CFIm contributes to the recruitment of multiprotein complexes on specific sequences on the pre-mRNA 3'-end, so called cleavage and polyadenylation signals (pA signals). Most pre-mRNAs contain multiple pA signals, resulting in alternative cleavage and polyadenylation (APA) producing mRNAs with variable 3'-end formation. The CFIm complex acts as a key regulator of cleavage and polyadenylation site choice during APA through its binding to 5'-UGUA-3' elements localized in the 3'-untranslated region (UTR) for a huge number of pre-mRNAs. Plays a role in mRNA export. This is Cleavage and polyadenylation specificity factor subunit 6 from Danio rerio (Zebrafish).